A 1575-amino-acid polypeptide reads, in one-letter code: Laminin subunit gamma-3 (1575 aa).

The first 19 residues, 1-19 (MAAAALLLGLALLAPRAAG), serve as a signal peptide directing secretion. One can recognise a Laminin N-terminal domain in the interval 31–270 (RPQRCLPVFE…AVSDFSVGGR (240 aa)). 2 N-linked (GlcNAc...) asparagine glycosylation sites follow: Asn87 and Asn119. 16 cysteine pairs are disulfide-bonded: Cys271–Cys280, Cys273–Cys290, Cys292–Cys301, Cys304–Cys324, Cys327–Cys336, Cys329–Cys352, Cys355–Cys364, Cys367–Cys380, Cys383–Cys395, Cys385–Cys401, Cys403–Cys412, Cys415–Cys427, Cys430–Cys441, Cys432–Cys448, Cys450–Cys459, and Cys462–Cys477. 4 Laminin EGF-like domains span residues 271 to 326 (CKCN…ECLP), 327 to 382 (CNCS…PCQP), 383 to 429 (CDCQ…GCRP), and 430 to 479 (CTCN…GCSS). The N-linked (GlcNAc...) asparagine glycan is linked to Asn295. Residue Asn328 is glycosylated (N-linked (GlcNAc...) asparagine). In terms of domain architecture, Laminin EGF-like 5; first part spans 480–489 (CFCYGHSKVC). Positions 499–672 (HILSDFHQGA…LSPPASWVEI (174 aa)) constitute a Laminin IV type A domain. Asn631 carries N-linked (GlcNAc...) asparagine glycosylation. The Laminin EGF-like 5; second part domain occupies 673–706 (CSCPTGYTGQFCESCAPGYKREMPQGGPYASCVP). 24 cysteine pairs are disulfide-bonded: Cys707–Cys715, Cys709–Cys722, Cys724–Cys733, Cys736–Cys752, Cys755–Cys763, Cys757–Cys774, Cys777–Cys786, Cys789–Cys807, Cys810–Cys824, Cys812–Cys831, Cys834–Cys843, Cys846–Cys863, Cys866–Cys880, Cys868–Cys887, Cys889–Cys898, Cys901–Cys914, Cys917–Cys929, Cys919–Cys936, Cys938–Cys947, Cys950–Cys962, Cys965–Cys977, Cys967–Cys983, Cys985–Cys994, and Cys997–Cys1010. Laminin EGF-like domains follow at residues 707–754 (CTCN…DCQP), 755–809 (CPCP…PCHQ), 810–865 (CQCS…KCMP), 866–916 (CSCH…GCRS), 917–964 (CKCH…GCRA), and 965–1013 (CRCS…CQQC). Asn837 carries an N-linked (GlcNAc...) asparagine glycan. An N-linked (GlcNAc...) asparagine glycan is attached at Asn980. Residues 1014–1575 (PSCYALVKEE…SLPENCASWQ (562 aa)) form a domain II and I region. A Cell attachment site motif is present at residues 1059–1061 (RGD). A coiled-coil region spans residues 1073–1134 (REAFLEQMMS…SEEEILHAAA (62 aa)). Asn1185 carries an N-linked (GlcNAc...) asparagine glycan. Residues 1201–1228 (LETQRDLEDRYQEVQAAQKALRTAVAEV) adopt a coiled-coil conformation. Positions 1378–1399 (KQAERMLGNAAPLSSSAKKKGR) are disordered. Coiled coils occupy residues 1410-1492 (KLAK…LARL) and 1523-1567 (GSLQ…LHSL).

In terms of assembly, laminin is a complex glycoprotein, consisting of three different polypeptide chains (alpha, beta, gamma), which are bound to each other by disulfide bonds into a cross-shaped molecule comprising one long and three short arms with globules at each end. Gamma-3 is a subunit of laminin-12 (laminin-213), laminin-14 (laminin-423) and laminin-15 (laminin-523). As to expression, broadly expressed in: skin, heart, lung, and the reproductive tracts.

The protein localises to the secreted. It is found in the extracellular space. Its subcellular location is the extracellular matrix. The protein resides in the basement membrane. Binding to cells via a high affinity receptor, laminin is thought to mediate the attachment, migration and organization of cells into tissues during embryonic development by interacting with other extracellular matrix components. This Homo sapiens (Human) protein is Laminin subunit gamma-3 (LAMC3).